The following is a 145-amino-acid chain: MSMAYEEYMRQVVLPMRQELTDAGFKELTTAEAVEDYIADAEGTTLVFINSVCGCAAGLARPAAIYSLQHDHTPDHLVTVFAGQDKEATAAMRSKFPDYPPSSPSMALLKGTEVVHFIPREDIEGAEPEAIVRNLALAYNEHCQK.

It belongs to the bacilliredoxin family.

In Shouchella clausii (strain KSM-K16) (Alkalihalobacillus clausii), this protein is Bacilliredoxin ABC2045.